We begin with the raw amino-acid sequence, 315 residues long: Cytochrome f (315 aa).

Residues 1 to 36 (MKQSLLSVLTKKSLRLLAALFLVVTSVFSLPQAAQA) form the signal peptide. The heme site is built by Phe37, Cys57, Cys60, and His61. The chain crosses the membrane as a helical span at residues 281–301 (IKWLMVFFSAIMISQTLLVLK).

This sequence belongs to the cytochrome f family. As to quaternary structure, the 4 large subunits of the cytochrome b6-f complex are cytochrome b6, subunit IV (17 kDa polypeptide, PetD), cytochrome f and the Rieske protein, while the 4 small subunits are PetG, PetL, PetM and PetN. The complex functions as a dimer. Heme is required as a cofactor.

The protein resides in the cellular thylakoid membrane. Component of the cytochrome b6-f complex, which mediates electron transfer between photosystem II (PSII) and photosystem I (PSI), cyclic electron flow around PSI, and state transitions. This chain is Cytochrome f, found in Acaryochloris marina (strain MBIC 11017).